The following is an 86-amino-acid chain: Sodium channel neurotoxin MeuNaTxalpha-4 (86 aa).

The signal sequence occupies residues 1 to 19 (MNYLILISFALLVITGVES). Positions 21–85 (RDAYIAKPHN…VPIRIPGKCH (65 aa)) constitute an LCN-type CS-alpha/beta domain. Cystine bridges form between Cys31–Cys84, Cys35–Cys57, Cys43–Cys67, and Cys47–Cys69. Residue Arg86 is a propeptide, removed by a carboxypeptidase.

Belongs to the long (4 C-C) scorpion toxin superfamily. Sodium channel inhibitor family. Alpha subfamily. In terms of tissue distribution, expressed by the venom gland.

It is found in the secreted. In terms of biological role, alpha toxins bind voltage-independently at site-3 of sodium channels (Nav) and inhibit the inactivation of the activated channels, thereby blocking neuronal transmission. This toxin inhibits inactivation of drosophila DmNav1 (EC(50)=130 nM). In Mesobuthus eupeus (Lesser Asian scorpion), this protein is Sodium channel neurotoxin MeuNaTxalpha-4.